The primary structure comprises 1806 residues: SH3 and multiple ankyrin repeat domains protein 3 (1806 aa).

Residues 76–150 (MDGPGASAVV…KFLDEERLLQ (75 aa)) form an intramolecular interaction with the ANK repeats region. At Tyr197 the chain carries Phosphotyrosine. 6 ANK repeats span residues 223–253 (SGECPLSLAAQLDNATDLLKVLKNGGAHLDF), 257–286 (DGLTAVHCATRQRNAAALTTLLDLGASPDY), 290–320 (RGLTPLYHSALGGGDALCCELLLHDHAQLGI), 324–353 (NGWQEIHQACRFGHVQHLEHLLFYGADMGA), 357–386 (SGNTALHICALYNQESCARVLLFRGANRDV), and 390–420 (NSQTAFQVAIIAGNFELAEVIKTHKDSDVVP). Basic and acidic residues predominate over residues 407–416 (AEVIKTHKDS). The tract at residues 407–467 (AEVIKTHKDS…AQPAASPGPS (61 aa)) is disordered. Residues 439–461 (LASPRPLQRSASDINLKGEAQPA) are compositionally biased toward pro residues. Residues Ser448, Ser450, Ser463, Ser470, and Ser558 each carry the phosphoserine modification. The region spanning 546-605 (VPGRKFIAVKAHSPQGEGEIPLHRGEAVKVLSIGEGGFWEGTVKGRTGWFPADCVEEVQM) is the SH3 domain. Phosphotyrosine is present on Tyr631. The region spanning 646-740 (VAVLQKRDHE…RLVMKVVSVT (95 aa)) is the PDZ domain. 2 disordered regions span residues 665–689 (KAETPIEEFTPTPAFPALQYLESVD) and 760–853 (PSTT…KGIP). The interval 753 to 760 (PPPPKRAP) is required for interaction with ABI1. Residue Ser770 is modified to Phosphoserine. Positions 813–845 (ATVKQRPTSRRITPAEISSLFERQGLPGPEKLP) are enriched in pro residues. Residues Ser857, Ser866, and Ser877 each carry the phosphoserine modification. Residues 871 to 1021 (RFPRSTSMQD…FSASLFAPSK (151 aa)) are disordered. Over residues 906-915 (DSGPPPAFSP) the composition is skewed to pro residues. Residues Ser966 and Ser973 each carry the phosphoserine modification. Thr988 is modified (phosphothreonine). Residues 993–1013 (PKRRPRPPGPDSPYANLGAFS) are compositionally biased toward gly residues. The residue at position 1006 (Tyr1006) is a Phosphotyrosine. The residue at position 1041 (Arg1041) is an Asymmetric dimethylarginine. Low complexity predominate over residues 1115–1124 (PGADLPSLQP). 3 disordered regions span residues 1115-1460 (PGAD…MSTL), 1475-1525 (ADGH…HHAA), and 1546-1584 (SKLWGDPVESRGLPGPEDDKPTVISELSSRLQQLNKDTR). The span at 1173–1193 (TGKPLDPSSPLALALAARERA) shows a compositional bias: basic and acidic residues. Thr1204 bears the Phosphothreonine mark. A phosphoserine mark is found at Ser1208, Ser1233, Ser1237, and Ser1240. The segment covering 1251–1261 (EAEKVPREERK) has biased composition (pro residues). Residue Thr1309 is modified to Phosphothreonine. Ser1328 bears the Phosphoserine mark. Positions 1360-1370 (LPPAQLSSSDE) are enriched in basic and acidic residues. Low complexity-rich tracts occupy residues 1371–1392 (ETREELARIGLVPPPEEFANGV) and 1444–1460 (HLETTSTISTVSSMSTL). Residues 1485-1491 (PPVPPKP) carry the SH3-binding motif. The residue at position 1495 (Ser1495) is a Phosphoserine. Residues 1495-1505 (SPLGKGPVTFR) are compositionally biased toward polar residues. Residues 1569–1589 (ISELSSRLQQLNKDTRSLGEE) are a coiled coil. Ser1585, Ser1596, Ser1604, and Ser1614 each carry phosphoserine. Residues 1627 to 1637 (PGGPGGGASYS) are compositionally biased toward low complexity. Positions 1627–1664 (PGGPGGGASYSVRPSGRYPVARRAPSPVKPASLERVEG) are disordered. The span at 1638-1657 (VRPSGRYPVARRAPSPVKPA) shows a compositional bias: pro residues. Ser1709, Ser1711, and Ser1713 each carry phosphoserine. One can recognise an SAM domain in the interval 1743 to 1806 (WSKFDVGDWL…ERALRQLDGS (64 aa)).

In terms of assembly, may homomultimerize via its SAM domain. Interacts with BAIAP2, DBNL and SLC17A7/VGLUT1. Interacts with DLGAP1/GKAP, GRM1/MGLUR1, GRM5/MGLUR5 and LZTS3 C-termini via its PDZ domain. Interacts with ABI1, HOMER1, HOMER2, HOMER3 and CTTN/cortactin SH3 domain. Is part of a complex with DLG4/PSD-95 and DLGAP1/GKAP. Interacts (via PDZ domain) with the GRIA1 subunit of the AMPA receptor (via PDZ-binding motif). Interacts with WASF1 and CYFIP2; the interactions mediate the association of SHANK3 with the WAVE1 complex. Interacts with ARPC2; the interaction probably mediates the association of SHANK3 with the Arp2/3 complex. Interacts (via ANK repeats) with SHARPIN and SPTAN1. Interacts (via PDZ domain) with ARHGAP44 (probably via PDZ-binding motif); the interaction takes place in dendritic spines and promotes GRIA1 exocytosis. Interacts with CAMK2A. Interacts with DIP2A. Interacts with ADGRL3. As to expression, expressed in the cerebral cortex and the cerebellum.

Its subcellular location is the cytoplasm. The protein resides in the postsynaptic density. It localises to the cell projection. It is found in the dendritic spine. Major scaffold postsynaptic density protein which interacts with multiple proteins and complexes to orchestrate the dendritic spine and synapse formation, maturation and maintenance. Interconnects receptors of the postsynaptic membrane including NMDA-type and metabotropic glutamate receptors via complexes with GKAP/PSD-95 and HOMER, respectively, and the actin-based cytoskeleton. Plays a role in the structural and functional organization of the dendritic spine and synaptic junction through the interaction with Arp2/3 and WAVE1 complex as well as the promotion of the F-actin clusters. By way of this control of actin dynamics, participates in the regulation of developing neurons growth cone motility and the NMDA receptor-signaling. Also modulates GRIA1 exocytosis and GRM5/MGLUR5 expression and signaling to control the AMPA and metabotropic glutamate receptor-mediated synaptic transmission and plasticity. May be required at an early stage of synapse formation and be inhibited by IGF1 to promote synapse maturation. This chain is SH3 and multiple ankyrin repeat domains protein 3 (SHANK3), found in Homo sapiens (Human).